The chain runs to 200 residues: Probable GTP-binding protein EngB (200 aa).

Residues glutamate 24–isoleucine 198 form the EngB-type G domain. Residues glycine 32–serine 39, glycine 59–methionine 63, aspartate 77–glycine 80, threonine 144–aspartate 147, and phenylalanine 177–alanine 179 each bind GTP. 2 residues coordinate Mg(2+): serine 39 and threonine 61.

It belongs to the TRAFAC class TrmE-Era-EngA-EngB-Septin-like GTPase superfamily. EngB GTPase family. Mg(2+) is required as a cofactor.

Its function is as follows. Necessary for normal cell division and for the maintenance of normal septation. This chain is Probable GTP-binding protein EngB, found in Nitrosococcus oceani (strain ATCC 19707 / BCRC 17464 / JCM 30415 / NCIMB 11848 / C-107).